Here is a 140-residue protein sequence, read N- to C-terminus: Putative nickel-responsive regulator (140 aa).

The Ni(2+) site is built by His-81, His-92, His-94, and Cys-100.

This sequence belongs to the transcriptional regulatory CopG/NikR family. The cofactor is Ni(2+).

Transcriptional regulator. The sequence is that of Putative nickel-responsive regulator from Methanococcoides burtonii (strain DSM 6242 / NBRC 107633 / OCM 468 / ACE-M).